Reading from the N-terminus, the 105-residue chain is Defensin-like protein 106 (105 aa).

The signal sequence occupies residues 1–24 (MANTPKTLIAFVFSVIVIISYVHC). 4 disulfides stabilise this stretch: Cys57/Cys94, Cys63/Cys87, Cys73/Cys92, and Cys77/Cys93.

Belongs to the DEFL family.

Its subcellular location is the secreted. This Arabidopsis thaliana (Mouse-ear cress) protein is Defensin-like protein 106.